We begin with the raw amino-acid sequence, 406 residues long: Argininosuccinate synthase (406 aa).

Residues 11 to 19 (AYSGGLDTS) and alanine 38 contribute to the ATP site. Positions 91 and 96 each coordinate L-citrulline. Glycine 121 serves as a coordination point for ATP. The L-aspartate site is built by threonine 123, asparagine 127, and aspartate 128. Asparagine 127 provides a ligand contact to L-citrulline. Positions 131, 181, 190, 266, and 278 each coordinate L-citrulline.

This sequence belongs to the argininosuccinate synthase family. Type 1 subfamily. Homotetramer.

It is found in the cytoplasm. The catalysed reaction is L-citrulline + L-aspartate + ATP = 2-(N(omega)-L-arginino)succinate + AMP + diphosphate + H(+). The protein operates within amino-acid biosynthesis; L-arginine biosynthesis; L-arginine from L-ornithine and carbamoyl phosphate: step 2/3. In Campylobacter jejuni (strain RM1221), this protein is Argininosuccinate synthase.